Here is a 643-residue protein sequence, read N- to C-terminus: 1-deoxy-D-xylulose-5-phosphate synthase (643 aa).

Thiamine diphosphate-binding positions include histidine 72 and 113–115 (GHA). Mg(2+) is bound at residue aspartate 144. Residues 145-146 (GA), asparagine 174, tyrosine 287, and glutamate 370 contribute to the thiamine diphosphate site. Asparagine 174 serves as a coordination point for Mg(2+).

It belongs to the transketolase family. DXPS subfamily. In terms of assembly, homodimer. It depends on Mg(2+) as a cofactor. Thiamine diphosphate serves as cofactor.

It carries out the reaction D-glyceraldehyde 3-phosphate + pyruvate + H(+) = 1-deoxy-D-xylulose 5-phosphate + CO2. Its pathway is metabolic intermediate biosynthesis; 1-deoxy-D-xylulose 5-phosphate biosynthesis; 1-deoxy-D-xylulose 5-phosphate from D-glyceraldehyde 3-phosphate and pyruvate: step 1/1. In terms of biological role, catalyzes the acyloin condensation reaction between C atoms 2 and 3 of pyruvate and glyceraldehyde 3-phosphate to yield 1-deoxy-D-xylulose-5-phosphate (DXP). This chain is 1-deoxy-D-xylulose-5-phosphate synthase, found in Prochlorococcus marinus (strain SARG / CCMP1375 / SS120).